Here is a 102-residue protein sequence, read N- to C-terminus: Small ribosomal subunit protein eS24 (102 aa).

This sequence belongs to the eukaryotic ribosomal protein eS24 family.

The protein is Small ribosomal subunit protein eS24 of Methanococcus maripaludis (strain C7 / ATCC BAA-1331).